The chain runs to 504 residues: Cytochrome P450 2K4 (504 aa).

Residue Cys-447 participates in heme binding.

This sequence belongs to the cytochrome P450 family. It depends on heme as a cofactor.

It is found in the endoplasmic reticulum membrane. Its subcellular location is the microsome membrane. It carries out the reaction an organic molecule + reduced [NADPH--hemoprotein reductase] + O2 = an alcohol + oxidized [NADPH--hemoprotein reductase] + H2O + H(+). This Oncorhynchus mykiss (Rainbow trout) protein is Cytochrome P450 2K4 (cyp2k4).